The sequence spans 956 residues: Valine--tRNA ligase (956 aa).

Residues 43 to 53 (PNITGNLHIGH) carry the 'HIGH' region motif. A 'KMSKS' region motif is present at residues 556-560 (KMSKS). Lys559 serves as a coordination point for ATP. Residues 889–920 (PKEKELKNLNKEISKIQLAINKLQQRLSNEEF) adopt a coiled-coil conformation.

It belongs to the class-I aminoacyl-tRNA synthetase family. ValS type 1 subfamily. As to quaternary structure, monomer.

Its subcellular location is the cytoplasm. It carries out the reaction tRNA(Val) + L-valine + ATP = L-valyl-tRNA(Val) + AMP + diphosphate. Its function is as follows. Catalyzes the attachment of valine to tRNA(Val). As ValRS can inadvertently accommodate and process structurally similar amino acids such as threonine, to avoid such errors, it has a 'posttransfer' editing activity that hydrolyzes mischarged Thr-tRNA(Val) in a tRNA-dependent manner. In Buchnera aphidicola subsp. Baizongia pistaciae (strain Bp), this protein is Valine--tRNA ligase.